The primary structure comprises 707 residues: Leucine-rich repeat neuronal protein 3 (707 aa).

The N-terminal stretch at 1-22 (MKDTPLQVHVLLGLAITTLVQA) is a signal peptide. Positions 23–69 (IDKKVDCPQLCTCEIRPWFTPRSIYMEASTVDCNDLGLLNFPARLPA) constitute an LRRNT domain. Over 23–626 (IDKKVDCPQL…DGKEYGKNHT (604 aa)) the chain is Extracellular. 12 LRR repeats span residues 70 to 91 (DTQI…TDFP), 93 to 114 (NLTG…NVQK), 117 to 138 (QLLS…CLYG), 141 to 162 (NLQE…AFIG), 165 to 186 (NLLR…WFDA), 189 to 210 (NLEI…NFQP), 213 to 234 (KLRS…ALAG), 237 to 258 (NLES…ALQK), 261 to 282 (NLKF…DFSN), 285 to 304 (HLKE…DSLA), 310 to 332 (DLRK…AFFR), and 335 to 358 (KLES…ESLP). N-linked (GlcNAc...) asparagine glycosylation is found at asparagine 93 and asparagine 103. N-linked (GlcNAc...) asparagine glycosylation occurs at asparagine 223. The region spanning 368–421 (NPIRCDCVIRWINMNKTNIRFMEPDSLFCVDPPEFQGQNVRQVHFRDMMEICLP) is the LRRCT domain. Residue asparagine 382 is glycosylated (N-linked (GlcNAc...) asparagine). An Ig-like C2-type domain is found at 421-514 (PLIAPESFPS…DLKSIMIKVG (94 aa)). Residues cysteine 444 and cysteine 496 are joined by a disulfide bond. N-linked (GlcNAc...) asparagine glycosylation is found at asparagine 522, asparagine 579, asparagine 608, and asparagine 624. A Fibronectin type-III domain is found at 523–614 (GSLNIKIRDI…QCVNVTTKSL (92 aa)). The chain crosses the membrane as a helical span at residues 627–647 (VFVACVGGLLGIIGVMCLFSC). Residues 648–707 (VSQEGSSEGEHSYAVNHCHKPALAFSELYPPLINLWESSKEKRATLEVKATAIGVPTNMS) lie on the Cytoplasmic side of the membrane.

As to expression, expressed in the brain, in Stronger expression in the ventricular zone and anlage of thalamus, spinal cord, and dorsal root ganglion in 11-17 dpc cerebellum and cerebral cortex in adults.

It localises to the membrane. The polypeptide is Leucine-rich repeat neuronal protein 3 (Lrrn3) (Mus musculus (Mouse)).